The primary structure comprises 375 residues: Queuine tRNA-ribosyltransferase (375 aa).

The Proton acceptor role is filled by Asp89. Substrate-binding positions include 89–93, Asp143, Gln187, and Gly214; that span reads DSGGF. Residues 245-251 form an RNA binding region; sequence GVGKPED. Asp264 (nucleophile) is an active-site residue. An RNA binding; important for wobble base 34 recognition region spans residues 269–273; the sequence is TRNAR. Residues Cys302, Cys304, Cys307, and His333 each contribute to the Zn(2+) site.

This sequence belongs to the queuine tRNA-ribosyltransferase family. In terms of assembly, homodimer. Within each dimer, one monomer is responsible for RNA recognition and catalysis, while the other monomer binds to the replacement base PreQ1. Zn(2+) is required as a cofactor.

It carries out the reaction 7-aminomethyl-7-carbaguanine + guanosine(34) in tRNA = 7-aminomethyl-7-carbaguanosine(34) in tRNA + guanine. The protein operates within tRNA modification; tRNA-queuosine biosynthesis. Its function is as follows. Catalyzes the base-exchange of a guanine (G) residue with the queuine precursor 7-aminomethyl-7-deazaguanine (PreQ1) at position 34 (anticodon wobble position) in tRNAs with GU(N) anticodons (tRNA-Asp, -Asn, -His and -Tyr). Catalysis occurs through a double-displacement mechanism. The nucleophile active site attacks the C1' of nucleotide 34 to detach the guanine base from the RNA, forming a covalent enzyme-RNA intermediate. The proton acceptor active site deprotonates the incoming PreQ1, allowing a nucleophilic attack on the C1' of the ribose to form the product. After dissociation, two additional enzymatic reactions on the tRNA convert PreQ1 to queuine (Q), resulting in the hypermodified nucleoside queuosine (7-(((4,5-cis-dihydroxy-2-cyclopenten-1-yl)amino)methyl)-7-deazaguanosine). This Aliivibrio fischeri (strain ATCC 700601 / ES114) (Vibrio fischeri) protein is Queuine tRNA-ribosyltransferase.